The following is a 282-amino-acid chain: MSKALKVGLDGGPYALAAGPDGAMWVTLAHSGEIARVTETGEVAVYPVAPQARPSIIAAGPDGAMWFTRAGDDRIGRITVDGELAEFELAEGSAPFGIAAGPDDALWFTAMTSGEVCRISTDGEVTSVAVVGGMPSMITAGPDGAMWFTINQGNAIGRLETDGTLTVRELPTPAAGPVGITATHDDAVWFTEIGADQLGRIPLDEAIQELELPGKPHAVVADPDDGVWVSLWGADQLARVSGDGEVVTIDLPSGSEPHGLAIGPDGAAWVALECGFVLRMPN.

A substrate-binding site is contributed by His-217. Glu-256 is a Mg(2+) binding site. His-258 (proton acceptor) is an active-site residue. Glu-273 is a Mg(2+) binding site.

This sequence belongs to the Vgb family. In terms of assembly, monomer. It depends on Mg(2+) as a cofactor.

Its function is as follows. Inactivates the type B streptogramin antibiotics by linearizing the lactone ring at the ester linkage, generating a free phenylglycine carboxylate and converting the threonyl moiety into 2-amino-butenoic acid. The sequence is that of Virginiamycin B lyase from Mycolicibacterium smegmatis (strain ATCC 700084 / mc(2)155) (Mycobacterium smegmatis).